Consider the following 262-residue polypeptide: MNNLERLRSENPLVICYTNDVVKNFTANGLLSLGASPAMSEAPEEAEDFTRMASALLINIGTLTRENEEDIIKIGKIANQQGTPIVFDPVAVGASTYRKNFCQRFLGEVNVTVIKGNASEILTLIDFNTTMKGTDSDSELDSVNIAKKAANTLNTAIVITGKDDIIAKNEKIIKLSNGSPLLTKITGAGCLLGGVLASFLFRNTQPSIDLLVEAVSVYNIAAEFAEQAPHVNGPGTFLSELLDQLYQMNDITYKNQVKKVEI.

Methionine 39 lines the substrate pocket. Positions 115 and 160 each coordinate ATP. Glycine 187 is a binding site for substrate.

It belongs to the Thz kinase family. The cofactor is Mg(2+).

It catalyses the reaction 5-(2-hydroxyethyl)-4-methylthiazole + ATP = 4-methyl-5-(2-phosphooxyethyl)-thiazole + ADP + H(+). Its pathway is cofactor biosynthesis; thiamine diphosphate biosynthesis; 4-methyl-5-(2-phosphoethyl)-thiazole from 5-(2-hydroxyethyl)-4-methylthiazole: step 1/1. Its function is as follows. Catalyzes the phosphorylation of the hydroxyl group of 4-methyl-5-beta-hydroxyethylthiazole (THZ). The sequence is that of Hydroxyethylthiazole kinase from Staphylococcus epidermidis (strain ATCC 35984 / DSM 28319 / BCRC 17069 / CCUG 31568 / BM 3577 / RP62A).